The following is a 179-amino-acid chain: Large ribosomal subunit protein uL5 (179 aa).

It belongs to the universal ribosomal protein uL5 family. In terms of assembly, part of the 50S ribosomal subunit; part of the 5S rRNA/L5/L18/L25 subcomplex. Contacts the 5S rRNA and the P site tRNA. Forms a bridge to the 30S subunit in the 70S ribosome.

Its function is as follows. This is one of the proteins that bind and probably mediate the attachment of the 5S RNA into the large ribosomal subunit, where it forms part of the central protuberance. In the 70S ribosome it contacts protein S13 of the 30S subunit (bridge B1b), connecting the 2 subunits; this bridge is implicated in subunit movement. Contacts the P site tRNA; the 5S rRNA and some of its associated proteins might help stabilize positioning of ribosome-bound tRNAs. The sequence is that of Large ribosomal subunit protein uL5 from Rickettsia felis (strain ATCC VR-1525 / URRWXCal2) (Rickettsia azadi).